Here is a 362-residue protein sequence, read N- to C-terminus: Chorismate synthase (362 aa).

An NADP(+)-binding site is contributed by Arg47. FMN contacts are provided by residues 124 to 126 (RAS), Gly286, 301 to 305 (KPTAT), and Arg327.

This sequence belongs to the chorismate synthase family. Homotetramer. The cofactor is FMNH2.

The catalysed reaction is 5-O-(1-carboxyvinyl)-3-phosphoshikimate = chorismate + phosphate. Its pathway is metabolic intermediate biosynthesis; chorismate biosynthesis; chorismate from D-erythrose 4-phosphate and phosphoenolpyruvate: step 7/7. Its function is as follows. Catalyzes the anti-1,4-elimination of the C-3 phosphate and the C-6 proR hydrogen from 5-enolpyruvylshikimate-3-phosphate (EPSP) to yield chorismate, which is the branch point compound that serves as the starting substrate for the three terminal pathways of aromatic amino acid biosynthesis. This reaction introduces a second double bond into the aromatic ring system. This Prochlorococcus marinus (strain SARG / CCMP1375 / SS120) protein is Chorismate synthase.